The chain runs to 758 residues: Probable serine/threonine-protein kinase HAL5-like (758 aa).

Disordered stretches follow at residues 1-170 (MGTV…SADD) and 189-252 (IDNA…HRGR). Positions 22 to 57 (RSISGSIKSLFKPSSVQNSTPTVSPHESSPPLGNSD) are enriched in polar residues. Positions 58 to 69 (NLKKLVDTKRAE) are enriched in basic and acidic residues. A compositionally biased stretch (low complexity) spans 129–153 (SSPRQSSSTNDRSSITSATSSVTSA). A compositionally biased stretch (basic and acidic residues) spans 216-226 (DKNFESSEYEI). A compositionally biased stretch (polar residues) spans 227–247 (RSNSLSRIHSTPQNESPTVNN). The Protein kinase domain maps to 442 to 744 (KSMGVVLGHG…IDQLLQSPWM (303 aa)). ATP is bound by residues 448–456 (LGHGAYGVV) and Lys485. Asp595 (proton acceptor) is an active-site residue.

This sequence belongs to the protein kinase superfamily. CAMK Ser/Thr protein kinase family. NPR/HAL subfamily. HAL5 sub-subfamily.

It carries out the reaction L-seryl-[protein] + ATP = O-phospho-L-seryl-[protein] + ADP + H(+). The enzyme catalyses L-threonyl-[protein] + ATP = O-phospho-L-threonyl-[protein] + ADP + H(+). The polypeptide is Probable serine/threonine-protein kinase HAL5-like (Vanderwaltozyma polyspora (strain ATCC 22028 / DSM 70294 / BCRC 21397 / CBS 2163 / NBRC 10782 / NRRL Y-8283 / UCD 57-17) (Kluyveromyces polysporus)).